The following is a 37-amino-acid chain: 24 kDa antigen (37 aa).

The protein is 24 kDa antigen of Plasmodium chabaudi.